Reading from the N-terminus, the 886-residue chain is Valine--tRNA ligase (886 aa).

Residues 43-53 (PYPTGRMHLGH) carry the 'HIGH' region motif. Positions 528–532 (KMSKS) match the 'KMSKS' region motif. Lysine 531 is an ATP binding site.

The protein belongs to the class-I aminoacyl-tRNA synthetase family. ValS type 2 subfamily.

It localises to the cytoplasm. It carries out the reaction tRNA(Val) + L-valine + ATP = L-valyl-tRNA(Val) + AMP + diphosphate. In terms of biological role, catalyzes the attachment of valine to tRNA(Val). As ValRS can inadvertently accommodate and process structurally similar amino acids such as threonine, to avoid such errors, it has a 'posttransfer' editing activity that hydrolyzes mischarged Thr-tRNA(Val) in a tRNA-dependent manner. This chain is Valine--tRNA ligase, found in Methanococcus maripaludis (strain DSM 14266 / JCM 13030 / NBRC 101832 / S2 / LL).